Reading from the N-terminus, the 222-residue chain is 6,7-dimethyl-8-ribityllumazine synthase, chloroplastic (222 aa).

The transit peptide at 1–66 directs the protein to the chloroplast; it reads MASFAASQTC…NRASFVVTNA (66 aa). 5-amino-6-(D-ribitylamino)uracil contacts are provided by residues Phe-89, 122-124, and 146-148; these read AYE and AVV. 151–152 lines the (2S)-2-hydroxy-3-oxobutyl phosphate pocket; it reads DT. The active-site Proton donor is the His-154. Residue Phe-179 coordinates 5-amino-6-(D-ribitylamino)uracil. Arg-193 lines the (2S)-2-hydroxy-3-oxobutyl phosphate pocket.

The protein belongs to the DMRL synthase family. As to quaternary structure, oligomer forming an icosahedral capsid.

The protein resides in the plastid. It localises to the chloroplast. It carries out the reaction (2S)-2-hydroxy-3-oxobutyl phosphate + 5-amino-6-(D-ribitylamino)uracil = 6,7-dimethyl-8-(1-D-ribityl)lumazine + phosphate + 2 H2O + H(+). The protein operates within cofactor biosynthesis; riboflavin biosynthesis; riboflavin from 2-hydroxy-3-oxobutyl phosphate and 5-amino-6-(D-ribitylamino)uracil: step 1/2. In terms of biological role, catalyzes the formation of 6,7-dimethyl-8-ribityllumazine by condensation of 5-amino-6-(D-ribitylamino)uracil with 3,4-dihydroxy-2-butanone 4-phosphate. This is the penultimate step in the biosynthesis of riboflavin. This chain is 6,7-dimethyl-8-ribityllumazine synthase, chloroplastic, found in Spinacia oleracea (Spinach).